An 894-amino-acid chain; its full sequence is Leucine--tRNA ligase, mitochondrial (894 aa).

The N-terminal 9 residues, 1–9 (MLSRPSSRF), are a transit peptide targeting the mitochondrion. Residues 56 to 66 (PYPSGALHIGH) carry the 'HIGH' region motif. Positions 646–650 (KMSKS) match the 'KMSKS' region motif. Lys-649 is a binding site for ATP.

Belongs to the class-I aminoacyl-tRNA synthetase family.

The protein localises to the mitochondrion matrix. The enzyme catalyses tRNA(Leu) + L-leucine + ATP = L-leucyl-tRNA(Leu) + AMP + diphosphate. Functionally, catalyzes the attachment of leucine to tRNA(Leu) in the mitochondrion. This is Leucine--tRNA ligase, mitochondrial (NAM2) from Saccharomyces cerevisiae (strain ATCC 204508 / S288c) (Baker's yeast).